The primary structure comprises 161 residues: Allophycocyanin alpha chain (161 aa).

N71 carries the post-translational modification N4-methylasparagine. C81 lines the (2R,3E)-phycocyanobilin pocket.

Belongs to the phycobiliprotein family. In terms of assembly, heterodimer of an alpha and a beta chain. Contains one covalently linked phycocyanobilin chromophore.

The protein localises to the plastid. Its subcellular location is the chloroplast thylakoid membrane. Light-harvesting photosynthetic bile pigment-protein from the phycobiliprotein complex. Allophycocyanin has a maximum absorption at approximately 650 nanometers. This Porphyra purpurea (Red seaweed) protein is Allophycocyanin alpha chain (apcA).